The following is a 273-amino-acid chain: 2,3,4,5-tetrahydropyridine-2,6-dicarboxylate N-succinyltransferase (273 aa).

The protein belongs to the transferase hexapeptide repeat family.

Its subcellular location is the cytoplasm. It carries out the reaction (S)-2,3,4,5-tetrahydrodipicolinate + succinyl-CoA + H2O = (S)-2-succinylamino-6-oxoheptanedioate + CoA. The protein operates within amino-acid biosynthesis; L-lysine biosynthesis via DAP pathway; LL-2,6-diaminopimelate from (S)-tetrahydrodipicolinate (succinylase route): step 1/3. The sequence is that of 2,3,4,5-tetrahydropyridine-2,6-dicarboxylate N-succinyltransferase from Acinetobacter baumannii (strain AB307-0294).